Here is a 535-residue protein sequence, read N- to C-terminus: Bifunctional purine biosynthesis protein PurH (535 aa).

The 146-residue stretch at 6–151 folds into the MGS-like domain; that stretch reads TRLPIRRALI…KNHKDVAIVV (146 aa).

It belongs to the PurH family.

It catalyses the reaction (6R)-10-formyltetrahydrofolate + 5-amino-1-(5-phospho-beta-D-ribosyl)imidazole-4-carboxamide = 5-formamido-1-(5-phospho-D-ribosyl)imidazole-4-carboxamide + (6S)-5,6,7,8-tetrahydrofolate. The catalysed reaction is IMP + H2O = 5-formamido-1-(5-phospho-D-ribosyl)imidazole-4-carboxamide. It participates in purine metabolism; IMP biosynthesis via de novo pathway; 5-formamido-1-(5-phospho-D-ribosyl)imidazole-4-carboxamide from 5-amino-1-(5-phospho-D-ribosyl)imidazole-4-carboxamide (10-formyl THF route): step 1/1. The protein operates within purine metabolism; IMP biosynthesis via de novo pathway; IMP from 5-formamido-1-(5-phospho-D-ribosyl)imidazole-4-carboxamide: step 1/1. The sequence is that of Bifunctional purine biosynthesis protein PurH from Pseudomonas fluorescens (strain ATCC BAA-477 / NRRL B-23932 / Pf-5).